The chain runs to 201 residues: Prostamide/prostaglandin F synthase (201 aa).

Y108 is modified (phosphotyrosine).

This sequence belongs to the peroxiredoxin-like PRXL2 family. Prostamide/prostaglandin F synthase subfamily.

It is found in the cytoplasm. The protein localises to the cytosol. The enzyme catalyses prostaglandin H2 + [thioredoxin]-dithiol = prostaglandin F2alpha + [thioredoxin]-disulfide. It catalyses the reaction prostamide F2alpha + [thioredoxin]-disulfide = prostamide H2 + [thioredoxin]-dithiol. Catalyzes the reduction of prostaglandin-ethanolamide H(2) (prostamide H(2)) to prostamide F(2alpha) with NADPH as proton donor. Also able to reduce prostaglandin H(2) to prostaglandin F(2alpha). The protein is Prostamide/prostaglandin F synthase (PRXL2B) of Bos taurus (Bovine).